A 763-amino-acid polypeptide reads, in one-letter code: Amine oxidase [copper-containing] 3 (763 aa).

Topologically, residues 2 to 6 (TQKTT) are cytoplasmic. Residues 7–27 (LVLLALAVITIFALVCVLLAG) form a helical; Signal-anchor for type II membrane protein membrane-spanning segment. At 28–763 (RSGDGGRLSQ…AFSHGGFTYK (736 aa)) the chain is on the extracellular side. The N-linked (GlcNAc...) asparagine glycan is linked to Asn137. A disulfide bond links Cys198 and Cys199. 2 N-linked (GlcNAc...) asparagine glycosylation sites follow: Asn232 and Asn294. Residue Asp386 is the Proton acceptor of the active site. Cys404 and Cys430 are disulfide-bonded. Residue Tyr471 is the Schiff-base intermediate with substrate; via topaquinone of the active site. Tyr471 is subject to 2',4',5'-topaquinone. Positions 520 and 522 each coordinate Cu(2+). 4 residues coordinate Ca(2+): Asp529, Leu530, Asp531, and Glu572. Residues Asn581 and Asn592 are each glycosylated (N-linked (GlcNAc...) asparagine). Ca(2+) is bound by residues Glu641 and Phe663. N-linked (GlcNAc...) asparagine glycosylation is present at Asn666. Glu667, Asp673, and Leu674 together coordinate Ca(2+). Position 684 (His684) interacts with Cu(2+). The cysteines at positions 734 and 741 are disulfide-linked.

This sequence belongs to the copper/topaquinone oxidase family. As to quaternary structure, homodimer; disulfide-linked. Probably forms heterodimers with AOC2. Cu(2+) is required as a cofactor. Requires Ca(2+) as cofactor. It depends on L-topaquinone as a cofactor. Topaquinone (TPQ) is generated by copper-dependent autoxidation of a specific tyrosyl residue. Post-translationally, N- and O-glycosylated. Highly expressed in adipocytes, aorta and lung. Expressed at lower levels in heart, kidney, large intestine, liver, small intestine and stomach.

The protein localises to the cell membrane. It carries out the reaction methylamine + O2 + H2O = formaldehyde + H2O2 + NH4(+). The enzyme catalyses benzylamine + O2 + H2O = benzaldehyde + H2O2 + NH4(+). It catalyses the reaction 2-phenylethylamine + O2 + H2O = 2-phenylacetaldehyde + H2O2 + NH4(+). Its function is as follows. Catalyzes the oxidative deamination of primary amines to the corresponding aldehydes with the concomitant production of hydrogen peroxide and ammonia. Has a preference for the primary monoamines methylamine and benzylamine. Could also act on 2-phenylethylamine but much less efficiently. At endothelial cells surface can also function as a cell adhesion protein that participates in lymphocyte extravasation and recirculation by mediating the binding of lymphocytes to peripheral lymph node vascular endothelial cells in an L-selectin-independent fashion. This is Amine oxidase [copper-containing] 3 from Rattus norvegicus (Rat).